Here is a 467-residue protein sequence, read N- to C-terminus: Putative laccase-16 (467 aa).

3 Plastocyanin-like domains span residues 7-88, 98-225, and 318-451; these read VLGS…PKHG, KEIP…YTDS, and DFPN…KDGK. Residues histidine 22, histidine 24, histidine 67, and histidine 69 each contribute to the Cu cation site. 8 residues coordinate Cu cation: histidine 368, histidine 371, histidine 373, histidine 430, cysteine 431, histidine 432, histidine 436, and methionine 441.

It belongs to the multicopper oxidase family. Cu cation serves as cofactor.

The protein localises to the secreted. Its subcellular location is the extracellular space. The protein resides in the apoplast. It catalyses the reaction 4 hydroquinone + O2 = 4 benzosemiquinone + 2 H2O. Lignin degradation and detoxification of lignin-derived products. The protein is Putative laccase-16 (LAC16) of Oryza sativa subsp. japonica (Rice).